Consider the following 333-residue polypeptide: Foldase protein PrsA (333 aa).

A signal peptide spans 1–22 (MKKSTKLLAGIVTLASAMTLAA). Cysteine 23 is lipidated: N-palmitoyl cysteine. The S-diacylglycerol cysteine moiety is linked to residue cysteine 23. The region spanning 145 to 240 (TPEMTTQVIT…NKFYIVKVTK (96 aa)) is the PpiC domain. The segment at 301 to 333 (DKKASKANTSKSDQKTSSDSSKDSQSSKSKSEK) is disordered. Residues 312–322 (SDQKTSSDSSK) show a composition bias toward basic and acidic residues. Low complexity predominate over residues 323 to 333 (DSQSSKSKSEK).

This sequence belongs to the PrsA family.

It localises to the cell membrane. It carries out the reaction [protein]-peptidylproline (omega=180) = [protein]-peptidylproline (omega=0). Functionally, plays a major role in protein secretion by helping the post-translocational extracellular folding of several secreted proteins. The polypeptide is Foldase protein PrsA (Streptococcus equi subsp. zooepidemicus (strain MGCS10565)).